Consider the following 540-residue polypeptide: Signal peptide peptidase-like 3 (540 aa).

An N-terminal signal peptide occupies residues M1 to A28. Topologically, residues D29–D194 are lumenal. Residues S98–N172 form the PA domain. N155 and N172 each carry an N-linked (GlcNAc...) asparagine glycan. The helical transmembrane segment at L195–S215 threads the bilayer. The Cytoplasmic segment spans residues E216 to D250. A helical membrane pass occupies residues I251–F273. The Lumenal portion of the chain corresponds to M274–S276. Residues W277 to M299 traverse the membrane as a helical segment. At A300–T321 the chain is on the cytoplasmic side. The helical transmembrane segment at M322 to I342 threads the bilayer. At K343–S347 the chain is on the lumenal side. Residues Y348–V368 traverse the membrane as a helical segment. Over R369–T377 the chain is Cytoplasmic. Residues V378 to F398 form a helical membrane-spanning segment. D387 is a catalytic residue. Residues H399–P429 are Lumenal-facing. The chain crosses the membrane as a helical span at residues W430–F450. D440 is a catalytic residue. Residues A451–Y466 are Cytoplasmic-facing. A helical membrane pass occupies residues F467–L487. Topologically, residues M488–G492 are lumenal. A helical membrane pass occupies residues Q493 to V513. A PAL motif is present at residues P494–L496. Residues R514–A540 are Cytoplasmic-facing.

The protein belongs to the peptidase A22B family. In terms of processing, glycosylated. In terms of tissue distribution, ubiquitous.

It is found in the endosome membrane. In terms of biological role, intramembrane-cleaving aspartic protease (I-CLiP) that cleaves type II membrane signal peptides in the hydrophobic plane of the membrane. This Arabidopsis thaliana (Mouse-ear cress) protein is Signal peptide peptidase-like 3 (SPPL3).